Reading from the N-terminus, the 116-residue chain is MAGIELERCQQQANEVTEIMRNNFGKVLERGVKLAELQQRSDQLLDMSSTFNKTTQNLAQKKCWENIRYRICVGLVVVGVLLIILIVLLVVFLPQSSDSSSAPRTQDAGIASGPGN.

Over 1-72 the chain is Cytoplasmic; it reads MAGIELERCQ…CWENIRYRIC (72 aa). One can recognise a v-SNARE coiled-coil homology domain in the interval 5-65; sequence ELERCQQQAN…QNLAQKKCWE (61 aa). Phosphoserine occurs at positions 41, 48, and 49. The helical; Anchor for type IV membrane protein transmembrane segment at 73–93 threads the bilayer; that stretch reads VGLVVVGVLLIILIVLLVVFL. The Vesicular segment spans residues 94 to 116; that stretch reads PQSSDSSSAPRTQDAGIASGPGN. The disordered stretch occupies residues 96 to 116; it reads SSDSSSAPRTQDAGIASGPGN.

Belongs to the synaptobrevin family. (Microbial infection) Targeted and hydrolyzed by C.botulinum neurotoxin type X (BoNT/X) which hydrolyzes the 40-Arg-|-Ser-41 bond and probably inhibits neurotransmitter release. It remains unknown whether BoNT/X is ever produced, or what organisms it targets.

Its subcellular location is the cell membrane. The protein localises to the endomembrane system. The protein resides in the golgi apparatus. It localises to the trans-Golgi network membrane. Functionally, may participate in trafficking events that are associated with myogenesis, such as myoblast fusion and/or GLUT4 trafficking. The chain is Vesicle-associated membrane protein 5 (VAMP5) from Homo sapiens (Human).